The chain runs to 757 residues: Myb-related protein A (757 aa).

HTH myb-type domains lie at 30–81 (KKIC…QKVL), 82–137 (NPEL…NPEV), and 138–188 (KKSS…RRKV). 3 DNA-binding regions (H-T-H motif) span residues 58–81 (WAFI…QKVL), 110–133 (WSLI…HNHL), and 161–184 (WAEI…NSTM). The tract at residues 187-209 (KVEQEGYLQDGTKSSSERTGSST) is disordered. Residues 197 to 209 (GTKSSSERTGSST) are compositionally biased toward polar residues. The segment at 235–300 (IPVYQYASPE…RLSSQAGSLP (66 aa)) is transcriptional activation domain. The negative regulatory domain stretch occupies residues 303 to 558 (SGSFVMEDCV…IRRSLLGSTP (256 aa)).

As to quaternary structure, component of the DREAM complex. As to expression, expressed ubiquitously.

The protein resides in the nucleus. Its function is as follows. Strong transcriptional activator; DNA-binding protein that specifically recognize the sequence 5'-YAAC[GT]G-3'. Could have a role in the proliferation and/or differentiation of neurogenic, spermatogenic and B-lymphoid cells. The protein is Myb-related protein A (MYBL1) of Gallus gallus (Chicken).